A 90-amino-acid chain; its full sequence is Hemoglobin subunit alpha-1 (90 aa).

The 90-residue stretch at 1-90 (VLTDDDKNHV…SKLSDLHAEK (90 aa)) folds into the Globin domain.

It belongs to the globin family. In terms of assembly, heterotetramer of two alpha chains and two beta chains. In terms of tissue distribution, red blood cells.

Its function is as follows. Involved in oxygen transport from the lung to the various peripheral tissues. The chain is Hemoglobin subunit alpha-1 from Saara hardwickii (Indian spiny-tailed lizard).